Here is a 377-residue protein sequence, read N- to C-terminus: MNKVLINDTTLRDGEQAAGVVFTLEEKVAIAKFLDTIGVPELEVGIPAMGEEEMRAICAISNLGLKANLLAWNRAVISDIKASVACGMERVHIAIPVSGIQIAAKFHGQWRVSLQRLKDCISFAVDQGLWVAVGGEDSSRADENFLLDVALYAQEWGASRFRFCDTVGVLDPFTTYGKVKLLVSALTIPVEVHTHNDFGMATANALAGIKAGASSVNTTVIGLGERAGNAALEEVVMAIKRIYGVDMGIDTPRLLELSQLVAAASGANVPPWKAIVGENTFAHESGIHAHGVLQNPDTYEPFAPEEVGWERRLVVGKHSGRHSVSNLLEQHGIFLNPEETQSVLDAVRQQSIKKKRSLTTEELLNLVKEQRYSHAAR.

One can recognise a Pyruvate carboxyltransferase domain in the interval 4-255 (VLINDTTLRD…DMGIDTPRLL (252 aa)).

This sequence belongs to the alpha-IPM synthase/homocitrate synthase family.

It catalyses the reaction acetyl-CoA + 2-oxoglutarate + H2O = (2R)-homocitrate + CoA + H(+). In terms of biological role, this protein is a Fe-Mo-cofactor biosynthetic component. The protein is Homocitrate synthase 1 (nifV1) of Nostoc sp. (strain PCC 7120 / SAG 25.82 / UTEX 2576).